We begin with the raw amino-acid sequence, 134 residues long: Lymphocyte antigen 6G (134 aa).

Residues 1–26 (MDTCHIAKSCVLILLVVLLCAERAQG) form the signal peptide. One can recognise a UPAR/Ly6 domain in the interval 27 to 118 (LECYNCIGVP…PTGGSSWTMA (92 aa)). Disulfide bonds link Cys-29–Cys-53, Cys-32–Cys-41, Cys-46–Cys-74, Cys-78–Cys-98, and Cys-99–Cys-104. The GPI-anchor amidated asparagine moiety is linked to residue Asn-105. Residues 106–134 (AAVPTGGSSWTMAGVLLFSLVSVLLQTFL) constitute a propeptide, removed in mature form.

In terms of tissue distribution, expressed in bone marrow.

It localises to the cell membrane. This chain is Lymphocyte antigen 6G (Ly6g), found in Mus musculus (Mouse).